The chain runs to 463 residues: Phosphoglucosamine mutase (463 aa).

Catalysis depends on Ser102, which acts as the Phosphoserine intermediate. Residues Ser102, Asp240, Asp242, and Asp244 each contribute to the Mg(2+) site. At Ser102 the chain carries Phosphoserine.

It belongs to the phosphohexose mutase family. Mg(2+) serves as cofactor. In terms of processing, activated by phosphorylation.

The catalysed reaction is alpha-D-glucosamine 1-phosphate = D-glucosamine 6-phosphate. Functionally, catalyzes the conversion of glucosamine-6-phosphate to glucosamine-1-phosphate. In Mycobacterium leprae (strain Br4923), this protein is Phosphoglucosamine mutase.